The following is an 86-amino-acid chain: MNFKPLGDRLLIQRVEEANTTASGIIIPDNAKEKPSKGKVIAVGSEVEDINVDDTVVFGKYSGNEIILDGEEFLIMESSDIFGILI.

It belongs to the GroES chaperonin family. In terms of assembly, heptamer of 7 subunits arranged in a ring. Interacts with the chaperonin GroEL.

Its subcellular location is the cytoplasm. Its function is as follows. Together with the chaperonin GroEL, plays an essential role in assisting protein folding. The GroEL-GroES system forms a nano-cage that allows encapsulation of the non-native substrate proteins and provides a physical environment optimized to promote and accelerate protein folding. GroES binds to the apical surface of the GroEL ring, thereby capping the opening of the GroEL channel. The protein is Co-chaperonin GroES of Sulfurovum sp. (strain NBC37-1).